The primary structure comprises 625 residues: E3 ubiquitin-protein ligase synoviolin (625 aa).

Over 1 to 4 the chain is Cytoplasmic; the sequence is MVRA. The helical transmembrane segment at 5-25 threads the bilayer; the sequence is ALVTATSLALTGAVVAHAYFL. Over 26–40 the chain is Lumenal; sequence KHQFYPTVVYLTKSS. The chain crosses the membrane as a helical span at residues 41–61; it reads PSMAVLYIQAFVLVFLLGKLM. The Cytoplasmic segment spans residues 62–98; sequence RKVFFGQLRAAEMEHLIERSWYAVTETCLAFTVFRDD. Residues 99–119 traverse the membrane as a helical segment; sequence FSPRFVALFTLLLFLKCFHWL. Residues 120–135 lie on the Lumenal side of the membrane; the sequence is AEDRVDFMERSPNISW. Residues 136 to 156 form a helical membrane-spanning segment; the sequence is VFHFRVLSLMVLLGVMDFLFV. At 157–169 the chain is on the cytoplasmic side; sequence NHACHSIITRGAS. The helical transmembrane segment at 170-190 threads the bilayer; that stretch reads VQLVFGFEYAILMTMVLTTFI. Residues 191–212 are Lumenal-facing; that stretch reads KYTLHTIDLQSENPWDNKAVYM. A helical transmembrane segment spans residues 213 to 235; the sequence is LYTELFTGFIKVLLYMAFMTIMI. Positions 236 to 270 are interaction with p53/TP53; sequence KVHTFPLFAIRPMYLAMRQFKKAVTDAIMSRRAIR. Residues 236 to 625 lie on the Cytoplasmic side of the membrane; sequence KVHTFPLFAI…GNLLKLASVN (390 aa). Zn(2+)-binding residues include Cys291, Cys294, Cys307, His309, His312, Cys315, Cys326, and Cys329. The RING-type; atypical zinc-finger motif lies at 291 to 330; that stretch reads CIICREEMVTGAKKLPCNHIFHSSCLRSWFQRQQTCPTCR. Disordered stretches follow at residues 337-361, 390-434, 462-487, and 523-625; these read SQPN…NAPI, PPPA…SAAP, FMSS…LEQE, and LSPP…ASVN. Over residues 342–361 the composition is skewed to pro residues; that stretch reads TPAPPAAQAPAPPAPANAPI. Over residues 423-434 the composition is skewed to low complexity; sequence AQSTAEAASAAP. Residues 462 to 471 show a composition bias toward pro residues; sequence FMSSMPPPPS. A compositionally biased stretch (polar residues) spans 523-564; it reads LSPPRSETNTGETSESANVESSPSTANTETAGQEIQSQSGES.

This sequence belongs to the HRD1 family. Homodimer.

It localises to the endoplasmic reticulum membrane. The enzyme catalyses S-ubiquitinyl-[E2 ubiquitin-conjugating enzyme]-L-cysteine + [acceptor protein]-L-lysine = [E2 ubiquitin-conjugating enzyme]-L-cysteine + N(6)-ubiquitinyl-[acceptor protein]-L-lysine.. It participates in protein modification; protein ubiquitination. Its function is as follows. E3 ubiquitin-protein ligase which accepts ubiquitin specifically from endoplasmic reticulum-associated UBC7 E2 ligase and transfers it to substrates, promoting their degradation. Component of the endoplasmic reticulum quality control (ERQC) system also called ER-associated degradation (ERAD) involved in ubiquitin-dependent degradation of misfolded endoplasmic reticulum proteins. Also promotes the degradation of normal but naturally short-lived proteins. Protects cells from ER stress-induced apoptosis. Sequesters p53 in the cytoplasm and promotes its degradation, thereby negatively regulating its biological function in transcription, cell cycle regulation and apoptosis. This chain is E3 ubiquitin-protein ligase synoviolin (syvn1), found in Danio rerio (Zebrafish).